A 351-amino-acid polypeptide reads, in one-letter code: sn-glycerol-3-phosphate import ATP-binding protein UgpC (351 aa).

In terms of domain architecture, ABC transporter spans 4-235; the sequence is IVLDNVRKSY…PASTFVATFI (232 aa). 37–44 contacts ATP; the sequence is GPSGCGKS.

The protein belongs to the ABC transporter superfamily. sn-glycerol-3-phosphate importer (TC 3.A.1.1.3) family. As to quaternary structure, the complex is composed of two ATP-binding proteins (UgpC), two transmembrane proteins (UgpA and UgpE) and a solute-binding protein (UgpB).

The protein resides in the cell inner membrane. The enzyme catalyses sn-glycerol 3-phosphate(out) + ATP + H2O = sn-glycerol 3-phosphate(in) + ADP + phosphate + H(+). Its function is as follows. Part of the ABC transporter complex UgpBAEC involved in sn-glycerol-3-phosphate (G3P) import. Responsible for energy coupling to the transport system. The chain is sn-glycerol-3-phosphate import ATP-binding protein UgpC from Brucella abortus biovar 1 (strain 9-941).